Reading from the N-terminus, the 149-residue chain is Globin (149 aa).

The 148-residue stretch at 2 to 149 (VLTKDEFDSL…KIFTGVAGQL (148 aa)) folds into the Globin domain. Residue His100 participates in heme binding.

Belongs to the globin family. As to quaternary structure, monomer.

In terms of biological role, oxygen binding protein. This Isoparorchis hypselobagri (Giant trematode) protein is Globin.